The primary structure comprises 197 residues: Xanthine phosphoribosyltransferase (197 aa).

Xanthine-binding residues include L20 and N27. A128–A132 provides a ligand contact to 5-phospho-alpha-D-ribose 1-diphosphate. K156 is a binding site for xanthine.

The protein belongs to the purine/pyrimidine phosphoribosyltransferase family. Xpt subfamily. Homodimer.

Its subcellular location is the cytoplasm. It catalyses the reaction XMP + diphosphate = xanthine + 5-phospho-alpha-D-ribose 1-diphosphate. The protein operates within purine metabolism; XMP biosynthesis via salvage pathway; XMP from xanthine: step 1/1. In terms of biological role, converts the preformed base xanthine, a product of nucleic acid breakdown, to xanthosine 5'-monophosphate (XMP), so it can be reused for RNA or DNA synthesis. The chain is Xanthine phosphoribosyltransferase from Bacillus cytotoxicus (strain DSM 22905 / CIP 110041 / 391-98 / NVH 391-98).